The sequence spans 338 residues: MQVYYDKDCDLSIIQGKKVAVIGYGSQGHAHACNLNDSGVDVTVGLRPGSSSIAKAEAHGLKVSDVPAAVAAADVVMILTPDEFQSQLYKNEIEPNLKEGATLAFAHGFAIHYNQVVPRKDLDVIMIAPKAPGHTVRSEFVKGGGIPDLVAIFQDASGNAKDVALSYACGVGGGRTGIIETTFKDETETDLFGEQAVLCGGAVELVKMGFETLTEAGYAPEMAYFECLHELKLIVDLMYEGGIANMNYSISNNAEFGEYVTGPRVINEESRKAMRQALKDIQDGEYAKNFILEGQTNYPSMTAHRRNNAAHPIEQVGEKLRAMMPWIESNKIIDKSKN.

The region spanning 1-181 (MQVYYDKDCD…GGGRTGIIET (181 aa)) is the KARI N-terminal Rossmann domain. NADP(+) contacts are provided by residues 24–27 (YGSQ), arginine 47, serine 50, serine 52, and 82–85 (DEFQ). The active site involves histidine 107. Glycine 133 contacts NADP(+). Residues 182–327 (TFKDETETDL…EKLRAMMPWI (146 aa)) enclose the KARI C-terminal knotted domain. Positions 190, 194, 226, and 230 each coordinate Mg(2+). A substrate-binding site is contributed by serine 251.

The protein belongs to the ketol-acid reductoisomerase family. The cofactor is Mg(2+).

It catalyses the reaction (2R)-2,3-dihydroxy-3-methylbutanoate + NADP(+) = (2S)-2-acetolactate + NADPH + H(+). The catalysed reaction is (2R,3R)-2,3-dihydroxy-3-methylpentanoate + NADP(+) = (S)-2-ethyl-2-hydroxy-3-oxobutanoate + NADPH + H(+). Its pathway is amino-acid biosynthesis; L-isoleucine biosynthesis; L-isoleucine from 2-oxobutanoate: step 2/4. It participates in amino-acid biosynthesis; L-valine biosynthesis; L-valine from pyruvate: step 2/4. Functionally, involved in the biosynthesis of branched-chain amino acids (BCAA). Catalyzes an alkyl-migration followed by a ketol-acid reduction of (S)-2-acetolactate (S2AL) to yield (R)-2,3-dihydroxy-isovalerate. In the isomerase reaction, S2AL is rearranged via a Mg-dependent methyl migration to produce 3-hydroxy-3-methyl-2-ketobutyrate (HMKB). In the reductase reaction, this 2-ketoacid undergoes a metal-dependent reduction by NADPH to yield (R)-2,3-dihydroxy-isovalerate. In Teredinibacter turnerae (strain ATCC 39867 / T7901), this protein is Ketol-acid reductoisomerase (NADP(+)).